The chain runs to 301 residues: Ubiquinone biosynthesis protein COQ4, mitochondrial (301 aa).

A mitochondrion-targeting transit peptide spans 1-46; the sequence is MEVTLKRSAALARQTTPLLRPLRPVATYPSNNNNNNNPTPQQRRPY. Residues 14 to 48 are disordered; sequence QTTPLLRPLRPVATYPSNNNNNNNPTPQQRRPYSL. A compositionally biased stretch (polar residues) spans 38–48; the sequence is PTPQQRRPYSL. Zn(2+) is bound by residues His185, Asp186, His189, and Glu201.

This sequence belongs to the COQ4 family. Component of a multi-subunit COQ enzyme complex, composed of at least COQ3, COQ4, COQ5, COQ6, COQ7 and COQ9. Zn(2+) is required as a cofactor.

Its subcellular location is the mitochondrion inner membrane. It carries out the reaction a 4-hydroxy-3-methoxy-5-(all-trans-polyprenyl)benzoate + H(+) = a 2-methoxy-6-(all-trans-polyprenyl)phenol + CO2. Its pathway is cofactor biosynthesis; ubiquinone biosynthesis. Its function is as follows. Lyase that catalyzes the C1-decarboxylation of 4-hydroxy-3-methoxy-5-(all-trans-polyprenyl)benzoic acid into 2-methoxy-6-(all-trans-polyprenyl)phenol during ubiquinone biosynthesis. The sequence is that of Ubiquinone biosynthesis protein COQ4, mitochondrial from Podospora anserina (strain S / ATCC MYA-4624 / DSM 980 / FGSC 10383) (Pleurage anserina).